The sequence spans 432 residues: Glutamate-1-semialdehyde 2,1-aminomutase 2 (432 aa).

Lys-268 carries the N6-(pyridoxal phosphate)lysine modification.

The protein belongs to the class-III pyridoxal-phosphate-dependent aminotransferase family. HemL subfamily. As to quaternary structure, homodimer. Pyridoxal 5'-phosphate is required as a cofactor.

It is found in the cytoplasm. The catalysed reaction is (S)-4-amino-5-oxopentanoate = 5-aminolevulinate. The protein operates within porphyrin-containing compound metabolism; protoporphyrin-IX biosynthesis; 5-aminolevulinate from L-glutamyl-tRNA(Glu): step 2/2. This is Glutamate-1-semialdehyde 2,1-aminomutase 2 from Listeria monocytogenes serotype 4b (strain F2365).